Here is a 208-residue protein sequence, read N- to C-terminus: Protein-L-isoaspartate O-methyltransferase (208 aa).

Serine 59 is a catalytic residue.

The protein belongs to the methyltransferase superfamily. L-isoaspartyl/D-aspartyl protein methyltransferase family.

The protein localises to the cytoplasm. The catalysed reaction is [protein]-L-isoaspartate + S-adenosyl-L-methionine = [protein]-L-isoaspartate alpha-methyl ester + S-adenosyl-L-homocysteine. Its function is as follows. Catalyzes the methyl esterification of L-isoaspartyl residues in peptides and proteins that result from spontaneous decomposition of normal L-aspartyl and L-asparaginyl residues. It plays a role in the repair and/or degradation of damaged proteins. In Vibrio parahaemolyticus serotype O3:K6 (strain RIMD 2210633), this protein is Protein-L-isoaspartate O-methyltransferase.